A 355-amino-acid chain; its full sequence is Uroporphyrinogen decarboxylase (355 aa).

Residues 27 to 31, Asp-78, Tyr-155, Ser-210, and His-328 each bind substrate; that span reads RQAGR.

The protein belongs to the uroporphyrinogen decarboxylase family. In terms of assembly, homodimer.

The protein localises to the cytoplasm. It catalyses the reaction uroporphyrinogen III + 4 H(+) = coproporphyrinogen III + 4 CO2. Its pathway is porphyrin-containing compound metabolism; protoporphyrin-IX biosynthesis; coproporphyrinogen-III from 5-aminolevulinate: step 4/4. Functionally, catalyzes the decarboxylation of four acetate groups of uroporphyrinogen-III to yield coproporphyrinogen-III. This Azotobacter vinelandii (strain DJ / ATCC BAA-1303) protein is Uroporphyrinogen decarboxylase.